The chain runs to 244 residues: tRNA pseudouridine synthase B (244 aa).

Aspartate 46 (nucleophile) is an active-site residue.

It belongs to the pseudouridine synthase TruB family. Type 1 subfamily.

The enzyme catalyses uridine(55) in tRNA = pseudouridine(55) in tRNA. In terms of biological role, responsible for synthesis of pseudouridine from uracil-55 in the psi GC loop of transfer RNAs. This chain is tRNA pseudouridine synthase B, found in Bordetella bronchiseptica (strain ATCC BAA-588 / NCTC 13252 / RB50) (Alcaligenes bronchisepticus).